The following is a 419-amino-acid chain: MERRYLKNPFPDFAGGENTPFASDEEHIKNLICTYVDAILEHCHPNSDDEDNRGDLYVGNAGIAFMFWKLNSCEQTRDLYPALDHAASFIRNAKVNANRYKKRSAERYSFLCGNAGIYAVSAAISQALKETEELSDDLANFKSGIPCSKEFMHTKYGCDEVLVGRAGYLSGCYWLNDVLPEKKITDDDLVSICQLIVTSGREYSKQNNSPCPLMYQYHGTEYLGAAHGLCAILHMLLDSPWFRTLPISAPAAELRDIKRSIDFFLELQDSDGNFPVALEDLRSGRDKRLVHWCHGAPGAVYVLAKAYLIFKEEKYLASLRRCADMVWKKGFLRKGPGICHGVAGNGYVFLLLFRLTNEMRYLYRAHKFMELLTNAEFKLRARTPDRPHSLYEGVAGTVCYLVDLLEPEQAYFPFMDVFH.

This sequence belongs to the LanC-like protein family.

In Drosophila melanogaster (Fruit fly), this protein is LanC-like protein 3 homolog.